The following is a 283-amino-acid chain: Phosphate import ATP-binding protein PstB 2 (283 aa).

Residues 36 to 278 (LQVKQFNFYY…PKKKQTEDYI (243 aa)) enclose the ABC transporter domain. 69–76 (GPSGCGKS) provides a ligand contact to ATP.

It belongs to the ABC transporter superfamily. Phosphate importer (TC 3.A.1.7) family. The complex is composed of two ATP-binding proteins (PstB), two transmembrane proteins (PstC and PstA) and a solute-binding protein (PstS).

It localises to the cell inner membrane. It catalyses the reaction phosphate(out) + ATP + H2O = ADP + 2 phosphate(in) + H(+). Functionally, part of the ABC transporter complex PstSACB involved in phosphate import. Responsible for energy coupling to the transport system. This Nitrosococcus oceani (strain ATCC 19707 / BCRC 17464 / JCM 30415 / NCIMB 11848 / C-107) protein is Phosphate import ATP-binding protein PstB 2.